A 190-amino-acid polypeptide reads, in one-letter code: Membrane protein FAM174A (190 aa).

The N-terminal stretch at 1–29 (MPTRRGCSGPCHFLASAFVLLLLPALNQS) is a signal peptide. N-linked (GlcNAc...) asparagine glycosylation is found at asparagine 27 and asparagine 83. The Extracellular portion of the chain corresponds to 30 to 123 (VVLPSTVPRA…NPSDKPMTQR (94 aa)). The segment at 37–119 (PRAVQESKPL…AVSPNPSDKP (83 aa)) is disordered. Residues 124–144 (ALTVLVVVSAAVLVYFVVRTV) form a helical membrane-spanning segment. Residues 145–190 (RMRRRNRKTRRYGVLDTNIENMELTPLEQDDEDDDNTLFDANHPRR) are Cytoplasmic-facing. The segment at 168 to 190 (LTPLEQDDEDDDNTLFDANHPRR) is disordered. Residues 172 to 181 (EQDDEDDDNT) are compositionally biased toward acidic residues.

This sequence belongs to the FAM174 family.

It localises to the membrane. The chain is Membrane protein FAM174A (Fam174a) from Rattus norvegicus (Rat).